The following is a 257-amino-acid chain: Phosphonates import ATP-binding protein PhnC (257 aa).

In terms of domain architecture, ABC transporter spans 4-248 (IEFKDVRKVY…AFNEIYGRSI (245 aa)). ATP is bound at residue 37–44 (GLSGSGKS).

This sequence belongs to the ABC transporter superfamily. Phosphonates importer (TC 3.A.1.9.1) family. The complex is composed of two ATP-binding proteins (PhnC), two transmembrane proteins (PhnE) and a solute-binding protein (PhnD).

It localises to the cell membrane. The catalysed reaction is phosphonate(out) + ATP + H2O = phosphonate(in) + ADP + phosphate + H(+). Functionally, part of the ABC transporter complex PhnCDE involved in phosphonates import. Responsible for energy coupling to the transport system. The sequence is that of Phosphonates import ATP-binding protein PhnC from Staphylococcus saprophyticus subsp. saprophyticus (strain ATCC 15305 / DSM 20229 / NCIMB 8711 / NCTC 7292 / S-41).